Consider the following 567-residue polypeptide: Maltase A2 (567 aa).

Positions 1-23 (MPKWAHLGLAALLLISTTQEGTA) are cleaved as a signal peptide. N-linked (GlcNAc...) asparagine glycans are attached at residues Asn30, Asn124, and Asn198. The active-site Nucleophile is Asp226. Glu298 serves as the catalytic Proton donor. An N-linked (GlcNAc...) asparagine glycan is attached at Asn312.

It belongs to the glycosyl hydrolase 13 family.

The enzyme catalyses Hydrolysis of terminal, non-reducing (1-&gt;4)-linked alpha-D-glucose residues with release of alpha-D-glucose.. In Drosophila melanogaster (Fruit fly), this protein is Maltase A2 (Mal-A2).